The primary structure comprises 313 residues: Protein OPG185 (313 aa).

An N-terminal signal peptide occupies residues 1–16 (MTQLPILLLLISLVYA). Residues 17 to 274 (TPSPQTSKKI…TSISNYKTKD (258 aa)) are Virion surface-facing. Residues Asn37, Asn69, Asn112, Asn159, Asn194, and Asn252 are each glycosylated (N-linked (GlcNAc...) asparagine; by host). A helical membrane pass occupies residues 275–295 (FVEIFGITTLIILSAVAIFCI). The Intravirion portion of the chain corresponds to 296-313 (TYYICNKHPRKYKTENKV).

The protein belongs to the orthopoxvirus OPG185 family. As to quaternary structure, heterodimerizes with OPG040. The heterodimer OPG185-OPG040 interacts with components of the entry fusion complex OPG143 and OPG094. Heterodimer with C3/VPC protein; disulfide-linked. In terms of processing, glycosylated; contains phosphate and sulfate-substituted glycans. O-glycosylation is required for hemagglutination and hemadsorption activities of infected cell membranes.

The protein resides in the virion membrane. It localises to the host membrane. In terms of biological role, prevents cell to cell fusion by interacting with and directing the viral OPG040 protein on the host plasma membrane. The OPG185-OPG040 complex associates with components of the entry fusion complex (EFC) presumably to avoid superinfection and syncytium formation. Via its interaction with C3/VCP protein, protects the infected cell and probably also the extracellular enveloped virus from complement attack. This Monkeypox virus protein is Protein OPG185 (OPG185).